The primary structure comprises 219 residues: ATP synthase subunit a (219 aa).

A run of 6 helical transmembrane segments spans residues 16 to 36, 57 to 79, 96 to 116, 122 to 142, 158 to 178, and 184 to 204; these read LSNW…FWLI, LLMG…FILF, LAVT…YTWI, ALAH…MVLM, LAAN…QGTL, and TSIV…VAII.

This sequence belongs to the ATPase A chain family. F-type ATPases have 2 components, CF(1) - the catalytic core - and CF(0) - the membrane proton channel. CF(1) has five subunits: alpha(3), beta(3), gamma(1), delta(1), epsilon(1). CF(0) has three main subunits: a, b and c.

The protein localises to the mitochondrion inner membrane. Functionally, mitochondrial membrane ATP synthase (F(1)F(0) ATP synthase or Complex V) produces ATP from ADP in the presence of a proton gradient across the membrane which is generated by electron transport complexes of the respiratory chain. F-type ATPases consist of two structural domains, F(1) - containing the extramembraneous catalytic core and F(0) - containing the membrane proton channel, linked together by a central stalk and a peripheral stalk. During catalysis, ATP synthesis in the catalytic domain of F(1) is coupled via a rotary mechanism of the central stalk subunits to proton translocation. Key component of the proton channel; it may play a direct role in the translocation of protons across the membrane. This Artemia franciscana (Brine shrimp) protein is ATP synthase subunit a (ATP6).